A 430-amino-acid chain; its full sequence is Histidine--tRNA ligase (430 aa).

It belongs to the class-II aminoacyl-tRNA synthetase family. As to quaternary structure, homodimer.

Its subcellular location is the cytoplasm. The catalysed reaction is tRNA(His) + L-histidine + ATP = L-histidyl-tRNA(His) + AMP + diphosphate + H(+). The polypeptide is Histidine--tRNA ligase (Acinetobacter baumannii (strain SDF)).